Reading from the N-terminus, the 177-residue chain is Large ribosomal subunit protein uL6 (177 aa).

The protein belongs to the universal ribosomal protein uL6 family. As to quaternary structure, part of the 50S ribosomal subunit.

This protein binds to the 23S rRNA, and is important in its secondary structure. It is located near the subunit interface in the base of the L7/L12 stalk, and near the tRNA binding site of the peptidyltransferase center. The protein is Large ribosomal subunit protein uL6 of Rhodopseudomonas palustris (strain BisB5).